The primary structure comprises 156 residues: 2-C-methyl-D-erythritol 2,4-cyclodiphosphate synthase (156 aa).

A divalent metal cation-binding residues include Asp-8 and His-10. Residues 8 to 10 (DVH) and 34 to 35 (HS) contribute to the 4-CDP-2-C-methyl-D-erythritol 2-phosphate site. Residue His-42 participates in a divalent metal cation binding. 4-CDP-2-C-methyl-D-erythritol 2-phosphate is bound by residues 56–58 (DIG), 61–65 (FPDTD), 100–106 (AQRPKMA), 132–135 (TTEE), and Phe-139.

It belongs to the IspF family. As to quaternary structure, homotrimer. Requires a divalent metal cation as cofactor.

It catalyses the reaction 4-CDP-2-C-methyl-D-erythritol 2-phosphate = 2-C-methyl-D-erythritol 2,4-cyclic diphosphate + CMP. Its pathway is isoprenoid biosynthesis; isopentenyl diphosphate biosynthesis via DXP pathway; isopentenyl diphosphate from 1-deoxy-D-xylulose 5-phosphate: step 4/6. Involved in the biosynthesis of isopentenyl diphosphate (IPP) and dimethylallyl diphosphate (DMAPP), two major building blocks of isoprenoid compounds. Catalyzes the conversion of 4-diphosphocytidyl-2-C-methyl-D-erythritol 2-phosphate (CDP-ME2P) to 2-C-methyl-D-erythritol 2,4-cyclodiphosphate (ME-CPP) with a corresponding release of cytidine 5-monophosphate (CMP). This Clostridium perfringens (strain ATCC 13124 / DSM 756 / JCM 1290 / NCIMB 6125 / NCTC 8237 / Type A) protein is 2-C-methyl-D-erythritol 2,4-cyclodiphosphate synthase.